Reading from the N-terminus, the 308-residue chain is Aspartate carbamoyltransferase catalytic subunit (308 aa).

Carbamoyl phosphate contacts are provided by Arg55 and Thr56. Lys83 is an L-aspartate binding site. Carbamoyl phosphate-binding residues include Arg105, His133, and Gln136. 2 residues coordinate L-aspartate: Arg166 and Arg220. 2 residues coordinate carbamoyl phosphate: Gly261 and Pro262.

Belongs to the aspartate/ornithine carbamoyltransferase superfamily. ATCase family. As to quaternary structure, heterododecamer (2C3:3R2) of six catalytic PyrB chains organized as two trimers (C3), and six regulatory PyrI chains organized as three dimers (R2).

The enzyme catalyses carbamoyl phosphate + L-aspartate = N-carbamoyl-L-aspartate + phosphate + H(+). The protein operates within pyrimidine metabolism; UMP biosynthesis via de novo pathway; (S)-dihydroorotate from bicarbonate: step 2/3. In terms of biological role, catalyzes the condensation of carbamoyl phosphate and aspartate to form carbamoyl aspartate and inorganic phosphate, the committed step in the de novo pyrimidine nucleotide biosynthesis pathway. This chain is Aspartate carbamoyltransferase catalytic subunit, found in Chlorobium phaeobacteroides (strain DSM 266 / SMG 266 / 2430).